The following is a 396-amino-acid chain: 1-deoxy-D-xylulose 5-phosphate reductoisomerase (396 aa).

T15, G16, S17, I18, G41, and N129 together coordinate NADPH. Residue K130 coordinates 1-deoxy-D-xylulose 5-phosphate. E131 contacts NADPH. D155 provides a ligand contact to Mn(2+). 1-deoxy-D-xylulose 5-phosphate is bound by residues S156, E157, S182, and H205. Mn(2+) is bound at residue E157. G211 serves as a coordination point for NADPH. Residues S218, N223, K224, and E227 each contribute to the 1-deoxy-D-xylulose 5-phosphate site. E227 is a binding site for Mn(2+).

Belongs to the DXR family. Mg(2+) is required as a cofactor. It depends on Mn(2+) as a cofactor.

The enzyme catalyses 2-C-methyl-D-erythritol 4-phosphate + NADP(+) = 1-deoxy-D-xylulose 5-phosphate + NADPH + H(+). It participates in isoprenoid biosynthesis; isopentenyl diphosphate biosynthesis via DXP pathway; isopentenyl diphosphate from 1-deoxy-D-xylulose 5-phosphate: step 1/6. Functionally, catalyzes the NADPH-dependent rearrangement and reduction of 1-deoxy-D-xylulose-5-phosphate (DXP) to 2-C-methyl-D-erythritol 4-phosphate (MEP). The chain is 1-deoxy-D-xylulose 5-phosphate reductoisomerase from Xanthomonas campestris pv. campestris (strain 8004).